The following is a 252-amino-acid chain: Phosphate import ATP-binding protein PstB (252 aa).

In terms of domain architecture, ABC transporter spans 6 to 247 (ITINNLNFYY…PRDKRTEDYI (242 aa)). 38 to 45 (GPSGCGKS) is a binding site for ATP.

It belongs to the ABC transporter superfamily. Phosphate importer (TC 3.A.1.7) family. The complex is composed of two ATP-binding proteins (PstB), two transmembrane proteins (PstC and PstA) and a solute-binding protein (PstS).

Its subcellular location is the cell membrane. It carries out the reaction phosphate(out) + ATP + H2O = ADP + 2 phosphate(in) + H(+). Its function is as follows. Part of the ABC transporter complex PstSACB involved in phosphate import. Responsible for energy coupling to the transport system. The protein is Phosphate import ATP-binding protein PstB of Moorella thermoacetica (strain ATCC 39073 / JCM 9320).